Consider the following 276-residue polypeptide: 2,3,4,5-tetrahydropyridine-2,6-dicarboxylate N-succinyltransferase (276 aa).

Residues R107 and D144 each contribute to the substrate site.

This sequence belongs to the transferase hexapeptide repeat family. As to quaternary structure, homotrimer.

Its subcellular location is the cytoplasm. The catalysed reaction is (S)-2,3,4,5-tetrahydrodipicolinate + succinyl-CoA + H2O = (S)-2-succinylamino-6-oxoheptanedioate + CoA. It functions in the pathway amino-acid biosynthesis; L-lysine biosynthesis via DAP pathway; LL-2,6-diaminopimelate from (S)-tetrahydrodipicolinate (succinylase route): step 1/3. This is 2,3,4,5-tetrahydropyridine-2,6-dicarboxylate N-succinyltransferase from Gluconobacter oxydans (strain 621H) (Gluconobacter suboxydans).